Here is a 222-residue protein sequence, read N- to C-terminus: Triosephosphate isomerase (222 aa).

9–11 (NYK) contacts substrate. The active-site Electrophile is the His93. Catalysis depends on Glu141, which acts as the Proton acceptor. Residues Ile146, Gly181, and 202 to 203 (AS) contribute to the substrate site.

Belongs to the triosephosphate isomerase family. As to quaternary structure, homotetramer; dimer of dimers.

The protein resides in the cytoplasm. It carries out the reaction D-glyceraldehyde 3-phosphate = dihydroxyacetone phosphate. Its pathway is carbohydrate biosynthesis; gluconeogenesis. It participates in carbohydrate degradation; glycolysis; D-glyceraldehyde 3-phosphate from glycerone phosphate: step 1/1. Involved in the gluconeogenesis. Catalyzes stereospecifically the conversion of dihydroxyacetone phosphate (DHAP) to D-glyceraldehyde-3-phosphate (G3P). This Methanosarcina acetivorans (strain ATCC 35395 / DSM 2834 / JCM 12185 / C2A) protein is Triosephosphate isomerase.